We begin with the raw amino-acid sequence, 449 residues long: Asparagine--tRNA ligase (449 aa).

The protein belongs to the class-II aminoacyl-tRNA synthetase family. In terms of assembly, homodimer.

The protein localises to the cytoplasm. It catalyses the reaction tRNA(Asn) + L-asparagine + ATP = L-asparaginyl-tRNA(Asn) + AMP + diphosphate + H(+). This is Asparagine--tRNA ligase from Mesomycoplasma hyopneumoniae (strain 232) (Mycoplasma hyopneumoniae).